The sequence spans 316 residues: MSFASETKKELTNLEMKECCEKAELSALLRMNGSLSFSNRRLSIDIQTENAAIARRIYTLLKKGYDVTVELLVRKKMRLKKNNVYIVRLVEKSREILADLHIVRDDFSFIRNISQELIEKKCCKRSYLRGAFLAGGSVNNPETSSYHLEIFSLYKEHNDAICELMNGFDLNSKTLERRKGYITYLKEAEKITEFLNIIGAHNALLRFEDIRIVRDMRNSVNRLVNCETANLNKTIGAALRQIENIRYIDETVGLDILPDKLREIAQLRRDYQDVTLKELGEMVSGGKISKSGINHRLRKIDEIAEKLRAGETVAKK.

Positions T275–A309 form a DNA-binding region, H-T-H motif.

This sequence belongs to the WhiA family.

Its function is as follows. Involved in cell division and chromosome segregation. In Bacillus cereus (strain G9842), this protein is Probable cell division protein WhiA.